A 262-amino-acid chain; its full sequence is 5'-nucleotidase SurE (262 aa).

The a divalent metal cation site is built by aspartate 8, aspartate 9, serine 40, and asparagine 92.

The protein belongs to the SurE nucleotidase family. Requires a divalent metal cation as cofactor.

Its subcellular location is the cytoplasm. It catalyses the reaction a ribonucleoside 5'-phosphate + H2O = a ribonucleoside + phosphate. In terms of biological role, nucleotidase that shows phosphatase activity on nucleoside 5'-monophosphates. In Xylella fastidiosa (strain M23), this protein is 5'-nucleotidase SurE.